The sequence spans 541 residues: uncharacterized protein (541 aa).

The next 6 membrane-spanning stretches (helical) occupy residues 57–77 (LVVTANLLGIGVALLLVTIAI), 90–110 (LTFGVVPGYVLLALALGSYAL), 144–164 (VGHLMFWGVGTALLTTLYGLI), 167–187 (AFIPRFLFAVSFCGVLVATAT), 221–241 (MVVWLLGSGVPVVGIALMAMF), and 257–277 (VLIISMVTLVFGFILMWILAW). Residues 278 to 329 (LTATPVRVVRAALRRVERGELRTNLVVFDGTELGELQRGFNAMVAGLRERER) form the HAMP domain. Residues 361–485 (AVVFIDIVGS…EPVNEAARLC (125 aa)) form the Guanylate cyclase domain.

It belongs to the adenylyl cyclase class-3 family.

The protein resides in the cell membrane. This is an uncharacterized protein from Mycobacterium tuberculosis (strain CDC 1551 / Oshkosh).